The following is a 488-amino-acid chain: UDP-N-acetylmuramate--L-alanine ligase (488 aa).

ATP is bound at residue 129–135 (GSHGKTT).

It belongs to the MurCDEF family.

Its subcellular location is the cytoplasm. The enzyme catalyses UDP-N-acetyl-alpha-D-muramate + L-alanine + ATP = UDP-N-acetyl-alpha-D-muramoyl-L-alanine + ADP + phosphate + H(+). The protein operates within cell wall biogenesis; peptidoglycan biosynthesis. Cell wall formation. This chain is UDP-N-acetylmuramate--L-alanine ligase, found in Prochlorococcus marinus (strain MIT 9303).